A 354-amino-acid polypeptide reads, in one-letter code: DNA integrity scanning protein DisA (354 aa).

In terms of domain architecture, DAC spans 6 to 144 (EKELKSILKL…GHIKYVLRDS (139 aa)). ATP contacts are provided by residues G73, L91, and 104–108 (TRHRT).

Belongs to the DisA family. In terms of assembly, homooctamer. Mg(2+) is required as a cofactor.

The catalysed reaction is 2 ATP = 3',3'-c-di-AMP + 2 diphosphate. Its function is as follows. Participates in a DNA-damage check-point that is active prior to asymmetric division when DNA is damaged. DisA forms globular foci that rapidly scan along the chromosomes during sporulation, searching for lesions. When a lesion is present, DisA pauses at the lesion site. This triggers a cellular response that culminates in a temporary block in sporulation initiation. Functionally, also has diadenylate cyclase activity, catalyzing the condensation of 2 ATP molecules into cyclic di-AMP (c-di-AMP). c-di-AMP acts as a signaling molecule that couples DNA integrity with progression of sporulation. The rise in c-di-AMP level generated by DisA while scanning the chromosome, operates as a positive signal that advances sporulation; upon encountering a lesion, the DisA focus arrests at the damaged site and halts c-di-AMP synthesis. This chain is DNA integrity scanning protein DisA, found in Clostridium kluyveri (strain ATCC 8527 / DSM 555 / NBRC 12016 / NCIMB 10680 / K1).